A 107-amino-acid chain; its full sequence is Guanylin (107 aa).

The N-terminal stretch at 1 to 20 (MNTFLLSALCLGAWAALVGA) is a signal peptide. A propeptide spanning residues 21–92 (VTVQDGDFSF…LNRLAVIAQD (72 aa)) is cleaved from the precursor. 3 disulfides stabilise this stretch: Cys-61/Cys-74, Cys-96/Cys-104, and Cys-99/Cys-107.

Belongs to the guanylin family.

The protein localises to the secreted. Functionally, endogenous activator of intestinal guanylate cyclase. It stimulates this enzyme through the same receptor binding region as the heat-stable enterotoxins. This Cavia porcellus (Guinea pig) protein is Guanylin (GUCA2A).